A 148-amino-acid polypeptide reads, in one-letter code: EKC/KEOPS complex subunit Lage3 (148 aa).

A disordered region spans residues 1 to 21 (MQTAHTGLSHTADGADGQTSR).

The protein belongs to the CTAG/PCC1 family. As to quaternary structure, component of the EKC/KEOPS complex composed of at least GON7, TP53RK, TPRKB, OSGEP and LAGE3; the whole complex dimerizes.

Its subcellular location is the cytoplasm. It localises to the nucleus. Component of the EKC/KEOPS complex that is required for the formation of a threonylcarbamoyl group on adenosine at position 37 (t(6)A37) in tRNAs that read codons beginning with adenine. The complex is probably involved in the transfer of the threonylcarbamoyl moiety of threonylcarbamoyl-AMP (TC-AMP) to the N6 group of A37. LAGE3 functions as a dimerization module for the complex. The sequence is that of EKC/KEOPS complex subunit Lage3 from Mus musculus (Mouse).